A 493-amino-acid polypeptide reads, in one-letter code: 3-octaprenyl-4-hydroxybenzoate carboxy-lyase (493 aa).

Position 172 (N172) interacts with Mn(2+). Prenylated FMN-binding positions include 175–177 (IYR), 189–191 (RWL), and 194–195 (RG). Residue E238 participates in Mn(2+) binding. D287 acts as the Proton donor in catalysis.

The protein belongs to the UbiD family. In terms of assembly, homohexamer. The cofactor is prenylated FMN. Mn(2+) serves as cofactor.

It localises to the cell membrane. It catalyses the reaction a 4-hydroxy-3-(all-trans-polyprenyl)benzoate + H(+) = a 2-(all-trans-polyprenyl)phenol + CO2. It participates in cofactor biosynthesis; ubiquinone biosynthesis. Functionally, catalyzes the decarboxylation of 3-octaprenyl-4-hydroxy benzoate to 2-octaprenylphenol, an intermediate step in ubiquinone biosynthesis. This chain is 3-octaprenyl-4-hydroxybenzoate carboxy-lyase, found in Shewanella sp. (strain MR-4).